Reading from the N-terminus, the 270-residue chain is Expansin-B10 (270 aa).

Residues 1–31 form the signal peptide; it reads MAVNVRTMWSSMRAQVAMVVALVFLVRGAWC. Asn-41 is a glycosylation site (N-linked (GlcNAc...) asparagine). An Expansin-like EG45 domain is found at 70–176; it reads GGGCGYKDVN…RRVKCKYDSK (107 aa). Cystine bridges form between Cys-73/Cys-101, Cys-104/Cys-171, and Cys-109/Cys-115. The region spanning 188-269 is the Expansin-like CBD domain; sequence NYLALLVKYV…NWKANTAYTA (82 aa).

This sequence belongs to the expansin family. Expansin B subfamily. As to expression, expressed in pollen.

The protein resides in the secreted. Its subcellular location is the cell wall. It is found in the membrane. In terms of biological role, may aid fertilization by loosening the cell wall of the stigma and style, thereby facilitating penetration of the pollen tube. Acts selectively on grass cell walls, which are relatively poor in pectins and xyloglucans and rich in glucuronoarabinoxylans and (1-3),(1-4)-beta-D-glucans, when compared with cell walls of other angiosperms, including other monocots. In Zea mays (Maize), this protein is Expansin-B10 (EXPB10).